The sequence spans 258 residues: Large ribosomal subunit protein bL21 (258 aa).

Basic and acidic residues predominate over residues 140–159; the sequence is KAKDAKDEAPKAAPKAEKKK. Residues 140-181 are disordered; sequence KAKDAKDEAPKAAPKAEKKKAAPKKAKAEAAPAAADEGTRPA.

It belongs to the bacterial ribosomal protein bL21 family. In terms of assembly, part of the 50S ribosomal subunit. Contacts protein L20.

This protein binds to 23S rRNA in the presence of protein L20. The protein is Large ribosomal subunit protein bL21 of Jannaschia sp. (strain CCS1).